A 950-amino-acid chain; its full sequence is Valine--tRNA ligase, mitochondrial (950 aa).

Residues 1 to 90 constitute a mitochondrion transit peptide; that stretch reads MFHFQRSFSS…ITIQDALARF (90 aa). The 'HIGH' region signature appears at 67-77; it reads PNITGKLHIGH. The short motif at 556–560 is the 'KMSKS' region element; it reads KMSKS. Lys559 is a binding site for ATP.

It belongs to the class-I aminoacyl-tRNA synthetase family.

The protein localises to the mitochondrion. The enzyme catalyses tRNA(Val) + L-valine + ATP = L-valyl-tRNA(Val) + AMP + diphosphate. This Schizosaccharomyces pombe (strain 972 / ATCC 24843) (Fission yeast) protein is Valine--tRNA ligase, mitochondrial (vas1).